The following is a 570-amino-acid chain: Sulfite reductase [NADPH] hemoprotein beta-component (570 aa).

Residues C434, C440, C479, and C483 each coordinate [4Fe-4S] cluster. C483 is a binding site for siroheme.

Belongs to the nitrite and sulfite reductase 4Fe-4S domain family. Alpha(8)-beta(8). The alpha component is a flavoprotein, the beta component is a hemoprotein. Siroheme serves as cofactor. [4Fe-4S] cluster is required as a cofactor.

The catalysed reaction is hydrogen sulfide + 3 NADP(+) + 3 H2O = sulfite + 3 NADPH + 4 H(+). Its pathway is sulfur metabolism; hydrogen sulfide biosynthesis; hydrogen sulfide from sulfite (NADPH route): step 1/1. Its function is as follows. Component of the sulfite reductase complex that catalyzes the 6-electron reduction of sulfite to sulfide. This is one of several activities required for the biosynthesis of L-cysteine from sulfate. This Shigella sonnei (strain Ss046) protein is Sulfite reductase [NADPH] hemoprotein beta-component.